The following is a 98-amino-acid chain: NADH-ubiquinone oxidoreductase chain 4L (98 aa).

A run of 3 helical transmembrane segments spans residues 1-21, 25-45, and 59-81; these read MSLVHINIFLAFTVSLVGLLM, HLMSSLLCLEGMMLSLFVMAT, and MPIILLVFAACERALGLSLLVMV.

This sequence belongs to the complex I subunit 4L family. In terms of assembly, core subunit of respiratory chain NADH dehydrogenase (Complex I) which is composed of 45 different subunits.

The protein localises to the mitochondrion inner membrane. It catalyses the reaction a ubiquinone + NADH + 5 H(+)(in) = a ubiquinol + NAD(+) + 4 H(+)(out). Its function is as follows. Core subunit of the mitochondrial membrane respiratory chain NADH dehydrogenase (Complex I) which catalyzes electron transfer from NADH through the respiratory chain, using ubiquinone as an electron acceptor. Part of the enzyme membrane arm which is embedded in the lipid bilayer and involved in proton translocation. The protein is NADH-ubiquinone oxidoreductase chain 4L (MT-ND4L) of Equus caballus (Horse).